We begin with the raw amino-acid sequence, 239 residues long: MLHYKRILLKLSGESLAGEDGYGINAGVLDQYAEEISEARDMGAQIALVIGGGNIFRGVSQAAANMDRVQADYMGMLATVINSLAFQDALERKGVFTRLLTAISMEQIAEPFIRRRAIRHLEKGRVVIFGAGTGNPYFTTDTAASLRAIEIEADIIVKGTRVDGIYDSDPEKNANAQFFPDISYLDVFHKKLGVMDMTAITLCSENSLPIVVMNMNEKGNLSRLLRGEKVGSLVHHEGV.

10-13 (KLSG) provides a ligand contact to ATP. The involved in allosteric activation by GTP stretch occupies residues 18-23 (GEDGYG). Residue Gly-52 participates in UMP binding. ATP contacts are provided by Gly-53 and Arg-57. UMP is bound by residues Asp-72 and 133–140 (TGNPYFTT). Thr-160, Tyr-166, and Asp-169 together coordinate ATP.

Belongs to the UMP kinase family. As to quaternary structure, homohexamer.

It is found in the cytoplasm. The enzyme catalyses UMP + ATP = UDP + ADP. It participates in pyrimidine metabolism; CTP biosynthesis via de novo pathway; UDP from UMP (UMPK route): step 1/1. With respect to regulation, allosterically activated by GTP. Inhibited by UTP. Its function is as follows. Catalyzes the reversible phosphorylation of UMP to UDP. This is Uridylate kinase from Chlorobium chlorochromatii (strain CaD3).